A 406-amino-acid polypeptide reads, in one-letter code: ATP phosphoribosyltransferase regulatory subunit (406 aa).

Belongs to the class-II aminoacyl-tRNA synthetase family. HisZ subfamily. As to quaternary structure, heteromultimer composed of HisG and HisZ subunits.

It localises to the cytoplasm. The protein operates within amino-acid biosynthesis; L-histidine biosynthesis; L-histidine from 5-phospho-alpha-D-ribose 1-diphosphate: step 1/9. Required for the first step of histidine biosynthesis. May allow the feedback regulation of ATP phosphoribosyltransferase activity by histidine. This Methylococcus capsulatus (strain ATCC 33009 / NCIMB 11132 / Bath) protein is ATP phosphoribosyltransferase regulatory subunit.